The following is a 281-amino-acid chain: 3-mercaptopyruvate sulfurtransferase (281 aa).

Rhodanese domains lie at aspartate 17–glutamate 135 and histidine 165–glutamate 278. Arginine 179 contacts substrate. Cysteine 238 functions as the Cysteine persulfide intermediate in the catalytic mechanism. Residues cysteine 238 to alanine 244 form a substrate specificity region.

As to quaternary structure, monomer.

The protein localises to the cytoplasm. The enzyme catalyses 2-oxo-3-sulfanylpropanoate + [thioredoxin]-dithiol = [thioredoxin]-disulfide + hydrogen sulfide + pyruvate + H(+). Functionally, catalyzes the transfer of sulfur from 3-mercaptopyruvate to a thiol-containing acceptor to form an intramolecular disulfide releasing hydrogen sulfide and pyruvate. May be involved in the enhancement of bacterial growth inhibition by serine. The sequence is that of 3-mercaptopyruvate sulfurtransferase (sseA) from Escherichia coli (strain K12).